A 133-amino-acid polypeptide reads, in one-letter code: Profilin (133 aa).

The protein belongs to the profilin family. As to quaternary structure, interacts with host TPM1. Interacts with protein A25.

The protein localises to the host cytoplasm. Functionally, participates in either intracellular transport of viral proteins or intercellular spread of the virus. Cellular profilins modulate actin filament dynamics (polymerization and depolymerization) via direct binding to actin through an actin-binding domain as well as by modulation of other actin-binding proteins. In contrast to cellular homologs, the poxvirus profilins seem to bind actin only weakly. In Variola virus (isolate Human/India/Ind3/1967) (VARV), this protein is Profilin (OPG171).